A 109-amino-acid chain; its full sequence is uncharacterized protein (109 aa).

This is an uncharacterized protein from Homo sapiens (Human).